We begin with the raw amino-acid sequence, 462 residues long: Elongation factor 1-alpha, somatic form (462 aa).

Glycine 2 carries the post-translational modification N,N,N-trimethylglycine. One can recognise a tr-type G domain in the interval 5 to 242 (KTHINIVVIG…DCILPPSRPT (238 aa)). The G1 stretch occupies residues 14 to 21 (GHVDSGKS). 14-21 (GHVDSGKS) is a GTP binding site. Positions 70 to 74 (GITID) are G2. A G3 region spans residues 91-94 (DAPG). GTP is bound by residues 91–95 (DAPGH) and 153–156 (NKMD). The segment at 153 to 156 (NKMD) is G4. Residues 194-196 (SGW) are G5. Residues glutamate 301 and glutamate 374 each carry the 5-glutamyl glycerylphosphorylethanolamine modification.

This sequence belongs to the TRAFAC class translation factor GTPase superfamily. Classic translation factor GTPase family. EF-Tu/EF-1A subfamily.

It is found in the cytoplasm. Its function is as follows. This protein promotes the GTP-dependent binding of aminoacyl-tRNA to the A-site of ribosomes during protein biosynthesis. The sequence is that of Elongation factor 1-alpha, somatic form (eef1as) from Xenopus laevis (African clawed frog).